Consider the following 158-residue polypeptide: Large ribosomal subunit protein bL35m (158 aa).

The protein belongs to the bacterial ribosomal protein bL35 family.

The protein resides in the mitochondrion. This is Large ribosomal subunit protein bL35m (mrpl-35) from Caenorhabditis elegans.